The sequence spans 229 residues: Ribonuclease 3 (229 aa).

Positions 4-133 (WEELQESVGF…FIGALYLDNG (130 aa)) constitute an RNase III domain. Glu46 provides a ligand contact to Mg(2+). The active site involves Asp50. 2 residues coordinate Mg(2+): Asp119 and Glu122. Residue Glu122 is part of the active site. The 70-residue stretch at 159-228 (DYKTQLQEIV…AQFAINKLIH (70 aa)) folds into the DRBM domain.

It belongs to the ribonuclease III family. As to quaternary structure, homodimer. The cofactor is Mg(2+).

It localises to the cytoplasm. The enzyme catalyses Endonucleolytic cleavage to 5'-phosphomonoester.. Its function is as follows. Digests double-stranded RNA. Involved in the processing of primary rRNA transcript to yield the immediate precursors to the large and small rRNAs (23S and 16S). Processes some mRNAs, and tRNAs when they are encoded in the rRNA operon. Processes pre-crRNA and tracrRNA of type II CRISPR loci if present in the organism. The protein is Ribonuclease 3 of Listeria monocytogenes serovar 1/2a (strain ATCC BAA-679 / EGD-e).